Consider the following 245-residue polypeptide: Retrovirus-related Pol polyprotein from type-1 retrotransposable element R1 (245 aa).

Residues Leu1–Ala105 form the Reverse transcriptase domain. The interval Glu106–Gln245 is nucleic acid-binding endonuclease.

It carries out the reaction DNA(n) + a 2'-deoxyribonucleoside 5'-triphosphate = DNA(n+1) + diphosphate. The protein is Retrovirus-related Pol polyprotein from type-1 retrotransposable element R1 of Popillia japonica (Japanese beetle).